The sequence spans 122 residues: Cofilin/actin-depolymerizing factor homolog 1 (122 aa).

Residues 4 to 122 (GIRVNDNCVT…ESAQDVADLK (119 aa)) enclose the ADF-H domain.

It belongs to the actin-binding proteins ADF family. In terms of assembly, interacts with monomeric actin, does not bind to actin polymers.

It is found in the cytoplasm. The protein resides in the cytoskeleton. Functionally, not involved in actin polymerisation, instead functions to stimulate nucleotide exchange on monomeric actin and influence turnover of the small amount of cytosolic actin microfilaments. Essential for erythrocytic schizogony. The protein is Cofilin/actin-depolymerizing factor homolog 1 of Plasmodium falciparum (isolate 3D7).